The sequence spans 250 residues: Ribosome-inactivating protein luffin-B (250 aa).

Glu160 is a catalytic residue.

It belongs to the ribosome-inactivating protein family. Type 1 RIP subfamily.

The enzyme catalyses Endohydrolysis of the N-glycosidic bond at one specific adenosine on the 28S rRNA.. In Luffa aegyptiaca (Sponge gourd), this protein is Ribosome-inactivating protein luffin-B.